The sequence spans 108 residues: DNA-binding protein HBbu (108 aa).

This sequence belongs to the bacterial histone-like protein family.

Functionally, histone-like DNA-binding protein which is capable of wrapping DNA to stabilize it, and thus to prevent its denaturation under extreme environmental conditions. The sequence is that of DNA-binding protein HBbu (hbb) from Borreliella afzelii (Borrelia afzelii).